A 570-amino-acid chain; its full sequence is Peptidyl-prolyl cis-trans isomerase CYP63 (570 aa).

The region spanning 10-174 (FLDVSIGGDP…SPVKIIDCGE (165 aa)) is the PPIase cyclophilin-type domain. The disordered stretch occupies residues 180–570 (AHDAAEREKG…GKRGLVSYAD (391 aa)). The span at 203-219 (VSDREAKETRKKESNEK) shows a compositional bias: basic and acidic residues. Composition is skewed to low complexity over residues 229 to 238 (SSDSYSSSSD) and 246 to 259 (EAYS…SSSS). Residues 262-292 (KHRKRKSTTRHKGRRGERKSKGRSGKKKARP) show a composition bias toward basic residues. Residues 297 to 309 (STNSSSDTESSSS) show a composition bias toward low complexity. Basic and acidic residues predominate over residues 323-339 (VKVDNADQHANLDDSVK). Phosphoserine is present on Ser340. The segment covering 340-351 (SRSRSPIRRRNQ) has biased composition (basic residues). Low complexity predominate over residues 352–365 (NSRSKSPSRSPVRV). Composition is skewed to basic and acidic residues over residues 387 to 397 (SPREKPTEETV) and 437 to 467 (SPPR…ERSP). Positions 468–490 (RGRFRSPPRRRSPPRYNRRRRST) are enriched in basic residues. A compositionally biased stretch (basic and acidic residues) spans 495–505 (DGYRRRLRDGS). Positions 509–523 (SPRHRSRSQSPRKRQ) are enriched in basic residues. Residues 546–555 (SPAESLSPSH) show a composition bias toward low complexity.

The protein belongs to the cyclophilin-type PPIase family. In terms of assembly, interacts with SNRNP35, RNU1, SCL28, SCL30, SR30 and SR34. The binding to SR34 is phosphorylation-dependent. Ubiquitous.

It localises to the nucleus. It is found in the nucleoplasm. The protein resides in the nucleus speckle. The catalysed reaction is [protein]-peptidylproline (omega=180) = [protein]-peptidylproline (omega=0). In terms of biological role, PPIases accelerate the folding of proteins. It catalyzes the cis-trans isomerization of proline imidic peptide bonds in oligopeptides. May be implicated in the folding, transport, and assembly of proteins. Probably involved in early steps of spliceosomal assembly. The protein is Peptidyl-prolyl cis-trans isomerase CYP63 (CYP63) of Arabidopsis thaliana (Mouse-ear cress).